The chain runs to 1537 residues: Dicer-like protein 1 (1537 aa).

The tract at residues serine 38–aspartate 68 is disordered. A Helicase ATP-binding domain is found at leucine 133–leucine 314. Leucine 146–threonine 153 is an ATP binding site. The DEAH box signature appears at aspartate 259–histidine 262. The 160-residue stretch at glutamate 459 to histidine 618 folds into the Helicase C-terminal domain. Positions alanine 651–alanine 741 constitute a Dicer dsRNA-binding fold domain. One can recognise a PAZ domain in the interval aspartate 891–alanine 1019. RNase III domains follow at residues isoleucine 1043–glycine 1202 and alanine 1253–lysine 1405. Mg(2+) is bound by residues glutamate 1294, aspartate 1391, and glutamate 1394. Residues threonine 1439–glycine 1507 form the DRBM domain. Zn(2+) is bound by residues cysteine 1451, histidine 1478, cysteine 1519, and cysteine 1521.

The protein belongs to the helicase family. Dicer subfamily. Requires Mg(2+) as cofactor. Mn(2+) is required as a cofactor.

In terms of biological role, dicer-like endonuclease involved in cleaving double-stranded RNA in the RNA interference (RNAi) pathway. Produces 21 to 25 bp dsRNAs (siRNAs) which target the selective destruction of homologous RNAs leading to sequence-specific suppression of gene expression, called post-transcriptional gene silencing (PTGS). Part of a broad host defense response against viral infection and transposons. The protein is Dicer-like protein 1 (dcl1) of Aspergillus fumigatus (strain ATCC MYA-4609 / CBS 101355 / FGSC A1100 / Af293) (Neosartorya fumigata).